The chain runs to 202 residues: Ribosome maturation factor RimM (202 aa).

A PRC barrel domain is found at 121-202 (KDEYYWVDLI…CITVDWQPDY (82 aa)).

It belongs to the RimM family. In terms of assembly, binds ribosomal protein uS19.

The protein resides in the cytoplasm. Its function is as follows. An accessory protein needed during the final step in the assembly of 30S ribosomal subunit, possibly for assembly of the head region. Essential for efficient processing of 16S rRNA. May be needed both before and after RbfA during the maturation of 16S rRNA. It has affinity for free ribosomal 30S subunits but not for 70S ribosomes. The protein is Ribosome maturation factor RimM of Polaromonas sp. (strain JS666 / ATCC BAA-500).